The following is a 121-amino-acid chain: 18 kDa learning-associated protein of slug (121 aa).

Disordered stretches follow at residues 44–67 (TMKT…GSME) and 95–121 (AVKK…AIKW). Residues 45–64 (MKTTEPIQENKTSEGTSTDG) show a composition bias toward polar residues.

This sequence belongs to the learning-associated protein family. In terms of tissue distribution, expressed predominantly in cerebral ganglia (at protein level). The mRNA is highly expressed in cerebral ganglia, and is detected at lower levels in visceral-pedal ganglia, head, and body, but is not detected in the tail.

It is found in the cytoplasm. It localises to the secreted. May be involved in modulating long-term memory formation and retention, at least with respect to odor-taste associative learning. This is 18 kDa learning-associated protein of slug from Lehmannia marginata (Tree slug).